The primary structure comprises 241 residues: MGCFNFIKVMMILFNMLIFLCGAALLAVGIWVSVDGPSFVKIFGPMSSSAMQFVNVGYFLIAAGAVLFALGFLGCYGAQTESKCALMTFFFILLLIFIAEVAAAVVALVYTTLAENFLTAVVVPNIKKEYGSQKDFTQVWNSTMAGLKCCGFTNYTDFEGSPYVRKNGTFPPYCCYDSVNNSFMEPCNNFTAHNMSVQGCFKQLLYDIRTNAVTVGGVAAGIGGLELAAMIVSMYLYCNLE.

Residues 1–11 (MGCFNFIKVMM) lie on the Cytoplasmic side of the membrane. Residues 12–32 (ILFNMLIFLCGAALLAVGIWV) form a helical membrane-spanning segment. Over 33-52 (SVDGPSFVKIFGPMSSSAMQ) the chain is Extracellular. A helical transmembrane segment spans residues 53–73 (FVNVGYFLIAAGAVLFALGFL). The Cytoplasmic segment spans residues 74–88 (GCYGAQTESKCALMT). Residues 89 to 109 (FFFILLLIFIAEVAAAVVALV) form a helical membrane-spanning segment. Residues 110-211 (YTTLAENFLT…KQLLYDIRTN (102 aa)) lie on the Extracellular side of the membrane. N-linked (GlcNAc...) asparagine glycans are attached at residues Asn141, Asn154, Asn167, Asn180, Asn189, and Asn194. A helical transmembrane segment spans residues 212-232 (AVTVGGVAAGIGGLELAAMIV). Topologically, residues 233–241 (SMYLYCNLE) are cytoplasmic.

It belongs to the tetraspanin (TM4SF) family. As to quaternary structure, interacts with SLC19A2. Interacts with NTRK1/TRKA.

It localises to the lysosome membrane. Structural component of specialized membrane microdomains known as tetraspanin-enriched microdomains (TERMs), which act as platforms for receptor clustering and signaling. Participates thereby in diverse biological functions such as cell signal transduction, adhesion, migration and protein trafficking. Regulates neuronal differentiation in response to NGF by facilitating NGF-mediated activation of NTRK1/TRKA receptor tyrosine kinase and subsequent downstream signaling pathways. Plays a role in the inhibition of TNFalpha-induced apoptosis. Mechanistically, inhibits the NF-kappa-B signaling pathway by blocking phosphorylation of CHUK. Also promotes the stability of the thiamine transporter 1/SLC19A2 in intestinal epithelial cells leading to an increase of thiamine uptake process. The chain is Tetraspanin-1 (TSPAN1) from Bos taurus (Bovine).